A 272-amino-acid chain; its full sequence is 3',5'-cyclic adenosine monophosphate phosphodiesterase CpdA (272 aa).

Residues D21, H23, D63, N93, H161, H200, and H202 each contribute to the Fe cation site. Residues H23, D63, and 93-94 (NH) contribute to the AMP site. H202 is an AMP binding site.

It belongs to the cyclic nucleotide phosphodiesterase class-III family. Monomer. It depends on a divalent metal cation as a cofactor.

The enzyme catalyses 3',5'-cyclic AMP + H2O = AMP + H(+). Its activity is regulated as follows. Activated by iron. Other divalent metal ions have no effect. Functionally, hydrolyzes cAMP to 5'-AMP. Plays an important regulatory role in modulating the intracellular concentration of cAMP, thereby influencing cAMP-dependent processes. Specifically required for regulation of virulence factors. Can also hydrolyze cGMP, but cGMP is unlikely to be synthesized by P.aeruginosa and cAMP is probably the biologically relevant substrate for CpdA in vivo. This Pseudomonas aeruginosa protein is 3',5'-cyclic adenosine monophosphate phosphodiesterase CpdA.